Here is a 524-residue protein sequence, read N- to C-terminus: Solute carrier family 2, facilitated glucose transporter member 2 (524 aa).

Over 1-6 (MTEDKI) the chain is Cytoplasmic. The chain crosses the membrane as a helical span at residues 7–26 (TGTLVFAVLTAVLGSFQFGY). The Extracellular segment spans residues 27 to 89 (DIGVINAPQQ…SWAEEETTAS (63 aa)). A glycan (N-linked (GlcNAc...) asparagine) is linked at Asn62. The chain crosses the membrane as a helical span at residues 90 to 115 (ASLIIMLWSLSVSIFAIGGMIASFFG). Residues 116-126 (GMLGDRLGRIK) are Cytoplasmic-facing. The helical transmembrane segment at 127 to 145 (AMLVANILSLVGALLMWFS) threads the bilayer. Topologically, residues 146–150 (KLGPS) are extracellular. A helical transmembrane segment spans residues 151-176 (HILIISGRGISGLYCGLISGLVPMYI). At 177-187 (GEIAPTKFRGA) the chain is on the cytoplasmic side. The chain crosses the membrane as a helical span at residues 188-211 (IGALHQLAIVTGILVSQIIGLDFL). Gln193 provides a ligand contact to D-glucose. Residues 212-216 (LGNHE) are Extracellular-facing. The chain crosses the membrane as a helical span at residues 217–239 (LWHILLGLSAVPAVLQSLMLFFC). At 240–303 (PESPRYLYIK…LFTNSSYRQP (64 aa)) the chain is on the cytoplasmic side. The helical transmembrane segment at 304–327 (ILVALMLHMAQQFSGINGIFYYST) threads the bilayer. D-glucose is bound by residues 314–315 (QQ) and Asn320. Residues 328–338 (SIFQTAGISQP) are Extracellular-facing. Residues 339–360 (VYATIGVGAINTIFTALSVFLV) traverse the membrane as a helical segment. Asn349 is a binding site for D-glucose. At 361 to 366 (EKAGRR) the chain is on the cytoplasmic side. A helical membrane pass occupies residues 367-389 (SLFLIGMSGMFVCAIFMSVGLVL). The Extracellular segment spans residues 390–394 (LDKLP). A helical transmembrane segment spans residues 395-413 (WMSYVSMTAIFLFVSFFEI). Glu412 and Trp420 together coordinate D-glucose. Residues 414–433 (GPGPIPWFMVAEFFSQGPRP) are Cytoplasmic-facing. Residues 434–458 (AALAMAAFSNWTCNFIIALCFQYIA) form a helical membrane-spanning segment. Residues 459–463 (DFCGP) are Extracellular-facing. Residues 464–482 (YVFFLFAGVVLVFTLFTFF) traverse the membrane as a helical segment. Topologically, residues 483–524 (KVPETKGKSFEEIAAEFQKKSGSAQSPKAAVEMEFLGATETV) are cytoplasmic. Thr523 carries the phosphothreonine modification.

It belongs to the major facilitator superfamily. Sugar transporter (TC 2.A.1.1) family. Glucose transporter subfamily. In terms of processing, N-glycosylated; required for stability and retention at the cell surface of pancreatic beta cells.

The protein resides in the cell membrane. The enzyme catalyses D-glucose(out) = D-glucose(in). It carries out the reaction D-fructose(out) = D-fructose(in). The catalysed reaction is L-dehydroascorbate(out) = L-dehydroascorbate(in). It catalyses the reaction D-galactose(in) = D-galactose(out). D-glucose and maltose competitively inhibit fructose transport. D-glucose, D-fructose and maltose inhibit deoxyglucose transport. Facilitative hexose transporter that mediates the transport of glucose, fructose and galactose. Likely mediates the bidirectional transfer of glucose across the plasma membrane of hepatocytes and is responsible for uptake of glucose by the beta cells; may comprise part of the glucose-sensing mechanism of the beta cell. May also participate with the Na(+)/glucose cotransporter in the transcellular transport of glucose in the small intestine and kidney. Also able to mediate the transport of dehydroascorbate. This Sus scrofa (Pig) protein is Solute carrier family 2, facilitated glucose transporter member 2.